A 297-amino-acid chain; its full sequence is Adrenocorticotropic hormone receptor (297 aa).

Topologically, residues 1-23 (MKHITDLYESVNSTMSNKSDCPP) are extracellular. N12 and N17 each carry an N-linked (GlcNAc...) asparagine glycan. Intrachain disulfides connect C21–C253 and C245–C251. A helical transmembrane segment spans residues 24-49 (VVLPEEVFFTISVIGVLENLIVLLAV). Over 50-58 (IKNKNLQSP) the chain is Cytoplasmic. The helical transmembrane segment at 59–79 (MYFFICSLAISDMLGSLYKIL) threads the bilayer. Residues 80–104 (ENILIIFRNMGYLEPRGGFESTADD) are Extracellular-facing. Residues 105–126 (VVDSLFILSLLGSICSLSAIAA) form a helical membrane-spanning segment. Residues 127 to 147 (DRYITIFHALQYQRLVTPRRA) are Cytoplasmic-facing. The helical transmembrane segment at 148 to 168 (AVVLLIIWACCIGSGITIVTF) threads the bilayer. Residues 169–180 (SHHVPAVIAFTA) are Extracellular-facing. Residues 181–199 (LFPLMLVFILCLYGHMFLL) traverse the membrane as a helical segment. The Cytoplasmic portion of the chain corresponds to 200-217 (ARSHARRVSTLPRANMKG). The helical transmembrane segment at 218–244 (AITLTVLLGVFIFCWAPFVLHILLMTF) threads the bilayer. Topologically, residues 245–256 (CPADPYCACYLA) are extracellular. The helical transmembrane segment at 257-278 (LFQVNAVLIMCNAIIDPFIYAF) threads the bilayer. Residues 279-297 (RSPELRDAFKKMIICKRYP) lie on the Cytoplasmic side of the membrane. The S-palmitoyl cysteine moiety is linked to residue C293.

The protein belongs to the G-protein coupled receptor 1 family. Homodimer. Interacts with corticotropin (ACTH). Interacts with MRAP; this interaction targets MC2R to the plasma membrane. Interacts with MRAP2; competing with MRAP for binding to MC2R and impairing the binding of corticotropin (ACTH). Ubiquitinated by MGRN1 that may be involved in post-endocytic trafficking and/or degradation of internalized receptor. As to expression, expressed in skin and adrenal gland tissues.

The protein resides in the cell membrane. Functionally, hormone receptor primarily expressed in adrenal cortex that plays a key role in regulating adrenocortical function. Upon corticotropin (ACTH) binding, facilitates the release of adrenal glucocorticoids, including cortisol and corticosterone. In addition, MC2R is required for fetal and neonatal adrenal gland development. Mechanistically, activates adenylate cyclase (cAMP), the MAPK cascade as well as the cAMP-dependent protein kinase A pathway leading to steroidogenic factor 1/NR5A1-mediated transcriptional activation. In Sus scrofa (Pig), this protein is Adrenocorticotropic hormone receptor (MC2R).